The primary structure comprises 256 residues: Myeloblastin (256 aa).

The N-terminal stretch at 1 to 25 is a signal peptide; the sequence is MAHRPPSPALASVLLALLLSGAARA. A propeptide spanning residues 26–27 is cleaved from the precursor; the sequence is AE. The Peptidase S1 domain maps to 28–248; the sequence is IVGGHEAQPH…YVDWIRSTLR (221 aa). Cysteines 56 and 72 form a disulfide. Active-site charge relay system residues include histidine 71 and aspartate 118. N-linked (GlcNAc...) asparagine glycans are attached at residues asparagine 129 and asparagine 174. 3 disulfides stabilise this stretch: cysteine 152–cysteine 209, cysteine 182–cysteine 188, and cysteine 199–cysteine 224. Serine 203 serves as the catalytic Charge relay system. The propeptide occupies 249–256; sequence RVEAKGRP.

The protein belongs to the peptidase S1 family. Elastase subfamily. May form dimers. Interacts with CD177; the interaction tethers PRTN3 to the cell surface; the interaction is direct. Interacts with SERPINB1. Interacts with ADGRG3. As to expression, expressed in polymorphonuclear leukocytes (at protein level). Expressed in neutrophils (at protein level). Expressed in differentiating neutrophils.

It localises to the cytoplasmic granule. Its subcellular location is the secreted. The protein resides in the cell membrane. It is found in the membrane raft. It catalyses the reaction Hydrolysis of proteins, including elastin, by preferential cleavage: -Ala-|-Xaa- &gt; -Val-|-Xaa-.. With respect to regulation, inhibited by phenylmethanesulfonyl fluoride (PMSF) and diisopropyl fluorophosphate (DFP). In terms of biological role, serine protease that degrades elastin, fibronectin, laminin, vitronectin, and collagen types I, III, and IV (in vitro). By cleaving and activating receptor F2RL1/PAR-2, enhances endothelial cell barrier function and thus vascular integrity during neutrophil transendothelial migration. Plays a role in neutrophil transendothelial migration, probably when associated with CD177. Triggers inflammatory processes in neutrophils by interacting with ADGRG3 upstream of F2RL1/PAR2 activation. The sequence is that of Myeloblastin (PRTN3) from Homo sapiens (Human).